The chain runs to 459 residues: MAP kinase-interacting serine/threonine-protein kinase 2 (459 aa).

A disordered region spans residues 28-67 (LDPAQHGDSDFSPQCEARPDMPSSQPIDIPDAKKRGRKKK). Residues 60–66 (KKRGRKK) carry the Nuclear localization signal motif. The residue at position 74 (serine 74) is a Phosphoserine. One can recognise a Protein kinase domain in the interval 84-368 (QLQEDVLGEG…AAQVLQHPWV (285 aa)). ATP contacts are provided by residues 90–98 (LGEGAHARV) and lysine 113. 160–162 (EKM) serves as a coordination point for staurosporine. Catalysis depends on aspartate 205, which acts as the Proton acceptor. Glutamate 209 lines the staurosporine pocket. Threonine 244 and threonine 249 each carry phosphothreonine. 3 residues coordinate Zn(2+): cysteine 299, cysteine 311, and cysteine 314. Threonine 379 bears the Phosphothreonine mark. Residues serine 431 and serine 434 each carry the phosphoserine modification. An MAP kinase binding motif is present at residues 438 to 442 (LAQRR). Serine 446 carries the phosphoserine modification. Threonine 450 carries the phosphothreonine modification.

This sequence belongs to the protein kinase superfamily. CAMK Ser/Thr protein kinase family. Monomer. Interacts with the C-terminal regions of EIF4G1 and EIF4G2; this interaction is promoted when MAPK pathways are repressed but repressed upon ERK proteins activation. Also binds to dephosphorylated MAPK3/ERK1 and MAPK1/ER2K. Interaction with phosphorylated MAPK3/ERK1 and MAPK1/ER2K protects it from dephosphorylation and inactivation. Interacts with ESR2 and EIF4E in the nucleus. Mg(2+) is required as a cofactor. Zn(2+) serves as cofactor. Dual phosphorylation of Thr-244 and Thr-249 activates the kinase. Phosphorylation of Thr-379 activates the kinase. Phosphorylated upon arsenic trioxide As(2)O(3) treatment. Phosphorylated by MAPK1/ERK2, MAPK11 and MAPK14. Dephosphorylated by PP2A.

The protein resides in the cytoplasm. It is found in the nucleus. The protein localises to the PML body. The catalysed reaction is L-seryl-[protein] + ATP = O-phospho-L-seryl-[protein] + ADP + H(+). The enzyme catalyses L-threonyl-[protein] + ATP = O-phospho-L-threonyl-[protein] + ADP + H(+). Inhibited by CGP57380 and staurosporine. Functionally, serine/threonine-protein kinase that phosphorylates SFPQ/PSF, HNRNPA1 and EIF4E. May play a role in the response to environmental stress and cytokines. Appears to regulate translation by phosphorylating EIF4E, thus increasing the affinity of this protein for the 7-methylguanosine-containing mRNA cap. Required for mediating PP2A-inhibition-induced EIF4E phosphorylation. Triggers EIF4E shuttling from cytoplasm to nucleus. Enhances the formation of EIF4F complex in pachytene spermatocytes, thus promoting mRNA translation during spermatogenesis. Displays a high basal kinase activity. Acts as a mediator of the suppressive effects of IFNgamma on hematopoiesis. Negative regulator for signals that control generation of arsenic trioxide As(2)O(3)-dependent apoptosis and anti-leukemic responses. Involved in anti-apoptotic signaling in response to serum withdrawal. The protein is MAP kinase-interacting serine/threonine-protein kinase 2 (Mknk2) of Rattus norvegicus (Rat).